The sequence spans 597 residues: Formate--tetrahydrofolate ligase (597 aa).

Position 84–91 (Thr-84–Ser-91) interacts with ATP.

It belongs to the formate--tetrahydrofolate ligase family.

The catalysed reaction is (6S)-5,6,7,8-tetrahydrofolate + formate + ATP = (6R)-10-formyltetrahydrofolate + ADP + phosphate. It functions in the pathway one-carbon metabolism; tetrahydrofolate interconversion. The chain is Formate--tetrahydrofolate ligase from Dehalococcoides mccartyi (strain CBDB1).